The chain runs to 454 residues: Probable succinate-semialdehyde dehydrogenase [NADP(+)] (454 aa).

NADP(+) contacts are provided by residues 130-131, 154-157, and 206-207; these read WN, KHAS, and GS. Glutamate 228 acts as the Proton acceptor in catalysis. Residue leucine 229 participates in NADP(+) binding. The active-site Nucleophile is the cysteine 262. Residue glutamate 359 coordinates NADP(+).

The protein belongs to the aldehyde dehydrogenase family.

It catalyses the reaction succinate semialdehyde + NADP(+) + H2O = succinate + NADPH + 2 H(+). It functions in the pathway amino-acid degradation; 4-aminobutanoate degradation. Catalyzes the NADP(+) dependent oxidation of succinate semialdehyde to succinate. The polypeptide is Probable succinate-semialdehyde dehydrogenase [NADP(+)] (gabD) (Synechocystis sp. (strain ATCC 27184 / PCC 6803 / Kazusa)).